The following is a 146-amino-acid chain: Cytochrome c-type biogenesis protein CcmE (146 aa).

Residues 1–8 (MHPKRKKR) lie on the Cytoplasmic side of the membrane. The helical; Signal-anchor for type II membrane protein transmembrane segment at 9-29 (LLIVLAGLAVVAVASGLILNA) threads the bilayer. Residues 30 to 146 (FRSNLVFFHT…IQRAGETVVQ (117 aa)) are Periplasmic-facing. Histidine 124 and tyrosine 128 together coordinate heme.

It belongs to the CcmE/CycJ family.

It is found in the cell inner membrane. Functionally, heme chaperone required for the biogenesis of c-type cytochromes. Transiently binds heme delivered by CcmC and transfers the heme to apo-cytochromes in a process facilitated by CcmF and CcmH. This Laribacter hongkongensis (strain HLHK9) protein is Cytochrome c-type biogenesis protein CcmE.